The primary structure comprises 606 residues: Isocitrate dehydrogenase kinase/phosphatase (606 aa).

Residues 354–360 (APGFKGT) and Lys-375 each bind ATP. The active site involves Asp-414.

The protein belongs to the AceK family.

Its subcellular location is the cytoplasm. It carries out the reaction L-seryl-[isocitrate dehydrogenase] + ATP = O-phospho-L-seryl-[isocitrate dehydrogenase] + ADP + H(+). In terms of biological role, bifunctional enzyme which can phosphorylate or dephosphorylate isocitrate dehydrogenase (IDH) on a specific serine residue. This is a regulatory mechanism which enables bacteria to bypass the Krebs cycle via the glyoxylate shunt in response to the source of carbon. When bacteria are grown on glucose, IDH is fully active and unphosphorylated, but when grown on acetate or ethanol, the activity of IDH declines drastically concomitant with its phosphorylation. The chain is Isocitrate dehydrogenase kinase/phosphatase from Rhodopseudomonas palustris (strain BisB5).